The sequence spans 206 residues: MLKKLDSLLSAAGIELPDQQKHQLIGYVELLDKWNKAYNLTSVRDPMQMLVRHILDSIVVNPHLQGSRFIDVGTGPGLPGIPLAIVRPDAHFVLLDSLGKRVRFLRQVQHELGLSNIEPVQSRVEDFAAKPPFDGVISRAFASLQDMLSWCHHLPAKPEGRFYALKGVRPDDELATLPEGIVVESVVRLRVPELDGERHLVILKSN.

Residues Gly73, Leu78, Val124 to Glu125, and Arg139 contribute to the S-adenosyl-L-methionine site.

It belongs to the methyltransferase superfamily. RNA methyltransferase RsmG family.

The protein resides in the cytoplasm. It catalyses the reaction guanosine(527) in 16S rRNA + S-adenosyl-L-methionine = N(7)-methylguanosine(527) in 16S rRNA + S-adenosyl-L-homocysteine. Specifically methylates the N7 position of guanine in position 527 of 16S rRNA. This chain is Ribosomal RNA small subunit methyltransferase G, found in Yersinia enterocolitica serotype O:8 / biotype 1B (strain NCTC 13174 / 8081).